We begin with the raw amino-acid sequence, 434 residues long: Tryptamine hydroxycinnamoyltransferase 2 (434 aa).

Active-site proton acceptor residues include H154 and D380.

This sequence belongs to the plant acyltransferase family.

Hydroxycinnamoyl transferase that catalyzes the transfer of an acyl from p-coumaryol-CoA to tryptamine, to produce coumaroyl tryptamine. Serotonin and tyramine serve as acyl acceptors in vitro. Can use caffeoyl-CoA, and to a lesser extent feruloyl-CoA, as acyl donors. In Oryza sativa subsp. japonica (Rice), this protein is Tryptamine hydroxycinnamoyltransferase 2.